Consider the following 978-residue polypeptide: Regulator of MON1-CCZ1 complex homolog (978 aa).

Composition is skewed to low complexity over residues 311 to 351 (TSTP…MISS) and 479 to 495 (NNNN…NNNN). 4 disordered regions span residues 311 to 363 (TSTP…HKEQ), 474 to 546 (SINQ…NSKT), 558 to 665 (KQQQ…NNHV), and 703 to 727 (EKEK…NNNI). The span at 496 to 515 (TAQTLNSTGNLSNSISIGGM) shows a compositional bias: polar residues. Over residues 516-539 (NTSTDNLTTTTTTSSSISSSPSNS) the composition is skewed to low complexity. Residues 582-591 (GDGGSGGSGG) are compositionally biased toward gly residues. 2 stretches are compositionally biased toward low complexity: residues 592 to 663 (SFYN…NNNN) and 710 to 727 (NNNN…NNNI). The Mic1 domain maps to 735–908 (KLELDSKYLI…HPSFDKYIKL (174 aa)). The segment at 955 to 978 (NNSSPTLRSSNSLNSSPRLQYSNN) is disordered.

Belongs to the RMC1 family.

It localises to the lysosome membrane. Its subcellular location is the late endosome membrane. May have a role in autophagy. This is Regulator of MON1-CCZ1 complex homolog from Dictyostelium discoideum (Social amoeba).